A 90-amino-acid polypeptide reads, in one-letter code: Small ribosomal subunit protein uS15c (90 aa).

Residues 1–11 are compositionally biased toward polar residues; sequence MVKNSFSSVIS. The disordered stretch occupies residues 1 to 20; it reads MVKNSFSSVISQEEKKENGG.

The protein belongs to the universal ribosomal protein uS15 family. Part of the 30S ribosomal subunit.

The protein localises to the plastid. It localises to the chloroplast. In Cucumis sativus (Cucumber), this protein is Small ribosomal subunit protein uS15c (rps15).